The chain runs to 279 residues: Shikimate dehydrogenase (NADP(+)) (279 aa).

Shikimate is bound by residues 21-23 and T68; that span reads SRS. The active-site Proton acceptor is K72. D83 is an NADP(+) binding site. 2 residues coordinate shikimate: N92 and D107. Residues 132-136, 156-161, and L221 each bind NADP(+); these read GAGGA and NRTVER. Shikimate is bound at residue Y223. G244 provides a ligand contact to NADP(+).

Belongs to the shikimate dehydrogenase family. As to quaternary structure, homodimer.

It catalyses the reaction shikimate + NADP(+) = 3-dehydroshikimate + NADPH + H(+). It functions in the pathway metabolic intermediate biosynthesis; chorismate biosynthesis; chorismate from D-erythrose 4-phosphate and phosphoenolpyruvate: step 4/7. Functionally, involved in the biosynthesis of the chorismate, which leads to the biosynthesis of aromatic amino acids. Catalyzes the reversible NADPH linked reduction of 3-dehydroshikimate (DHSA) to yield shikimate (SA). This Nitrobacter winogradskyi (strain ATCC 25391 / DSM 10237 / CIP 104748 / NCIMB 11846 / Nb-255) protein is Shikimate dehydrogenase (NADP(+)).